A 545-amino-acid polypeptide reads, in one-letter code: MAAKEVKFGDSARQRMLAGVNILADAVKATLGPKGRNVVLEKSFGAPTITKDGVSVAKEISLKDKFENMGAQMVKEVASKASDDAGDGTTTATVLAQAIVNEGLKSVAAGMNPMDLKRGIDKAIAEAVKHVQSIAVPCADSKSISQVGTISANSDSSIGNLIAEAMEKVGKEGVITVEEGTSLDNELDVVEGMQFDRGYLSPYFINNQDNMSVEHDNPFILLVDKKISNIRELLPVLEGVAKSGKPLVIVAEDVEGEALATLVVNNIRGIVKVAAVKAPGFGDRRKAMLQDIAVLTGGTVISEEVGLDLESATLEHLGTAKRVTMNKDNTTIVDGAGKAEEIKTRVQQIRVQIEETSSDYDREKLQERVAKLAGGVAVIKVGAATEVEMKEKKARVEDALHATRAAVEEGVVPGGGTALIRAVAAIADLKGDNEDQNAGIGIARRAMESPLRQIVANAGEEPSVVADSVKKGSGNFGYNAATGVYGDMIEMGILDPAKVTRTALQAAGSIAGLMITTEAMVADLPEDKPAAAPDMGGMGGMGGMM.

Residues 30-33 (TLGP), K51, 87-91 (DGTTT), G415, 479-481 (NAA), and D495 contribute to the ATP site.

The protein belongs to the chaperonin (HSP60) family. As to quaternary structure, forms a cylinder of 14 subunits composed of two heptameric rings stacked back-to-back. Interacts with the co-chaperonin GroES.

It localises to the cytoplasm. The enzyme catalyses ATP + H2O + a folded polypeptide = ADP + phosphate + an unfolded polypeptide.. Together with its co-chaperonin GroES, plays an essential role in assisting protein folding. The GroEL-GroES system forms a nano-cage that allows encapsulation of the non-native substrate proteins and provides a physical environment optimized to promote and accelerate protein folding. The polypeptide is Chaperonin GroEL (Cellvibrio japonicus (strain Ueda107) (Pseudomonas fluorescens subsp. cellulosa)).